The chain runs to 81 residues: Photosystem I iron-sulfur center (81 aa).

4Fe-4S ferredoxin-type domains follow at residues 2-31 and 39-68; these read SHSV…MVPW and IASA…VRVY. Residues cysteine 11, cysteine 14, cysteine 17, cysteine 21, cysteine 48, cysteine 51, cysteine 54, and cysteine 58 each contribute to the [4Fe-4S] cluster site.

As to quaternary structure, the eukaryotic PSI reaction center is composed of at least 11 subunits. [4Fe-4S] cluster serves as cofactor.

Its subcellular location is the plastid. It localises to the chloroplast thylakoid membrane. It catalyses the reaction reduced [plastocyanin] + hnu + oxidized [2Fe-2S]-[ferredoxin] = oxidized [plastocyanin] + reduced [2Fe-2S]-[ferredoxin]. Apoprotein for the two 4Fe-4S centers FA and FB of photosystem I (PSI); essential for photochemical activity. FB is the terminal electron acceptor of PSI, donating electrons to ferredoxin. The C-terminus interacts with PsaA/B/D and helps assemble the protein into the PSI complex. Required for binding of PsaD and PsaE to PSI. PSI is a plastocyanin/cytochrome c6-ferredoxin oxidoreductase, converting photonic excitation into a charge separation, which transfers an electron from the donor P700 chlorophyll pair to the spectroscopically characterized acceptors A0, A1, FX, FA and FB in turn. The sequence is that of Photosystem I iron-sulfur center from Pleurastrum terricola (Filamentous green alga).